We begin with the raw amino-acid sequence, 242 residues long: Phosphoribosylaminoimidazole-succinocarboxamide synthase (242 aa).

Belongs to the SAICAR synthetase family.

The enzyme catalyses 5-amino-1-(5-phospho-D-ribosyl)imidazole-4-carboxylate + L-aspartate + ATP = (2S)-2-[5-amino-1-(5-phospho-beta-D-ribosyl)imidazole-4-carboxamido]succinate + ADP + phosphate + 2 H(+). It participates in purine metabolism; IMP biosynthesis via de novo pathway; 5-amino-1-(5-phospho-D-ribosyl)imidazole-4-carboxamide from 5-amino-1-(5-phospho-D-ribosyl)imidazole-4-carboxylate: step 1/2. The polypeptide is Phosphoribosylaminoimidazole-succinocarboxamide synthase (Trichodesmium erythraeum (strain IMS101)).